Consider the following 82-residue polypeptide: RNA-binding protein Hfq (82 aa).

The Sm domain occupies 9–68; that stretch reads DPFLNTLRKEHVPVSIYLVNGIKLQGKVDSFDQYVIMLKNTVSQMVYKHAISTIVPGRPV.

This sequence belongs to the Hfq family. As to quaternary structure, homohexamer.

Functionally, RNA chaperone that binds small regulatory RNA (sRNAs) and mRNAs to facilitate mRNA translational regulation in response to envelope stress, environmental stress and changes in metabolite concentrations. Also binds with high specificity to tRNAs. This is RNA-binding protein Hfq from Methylococcus capsulatus (strain ATCC 33009 / NCIMB 11132 / Bath).